The chain runs to 446 residues: MSRRNAGAMQREGSVKDWEEFDPSPSPKLAYSQSYVAMRGLLTSVASLDLVLMSSSLKSAWAAISSHKHARSLERSRSKGMSLKRAMLQLLVCFMVGIFIGFTPPFSVDLPGKIASENGRLPFDGDAIDRRQMVERQGTKLEPFVAEAESEASSEPQVEEGPPVPAMLDDEADFVEASPIVHSVNDSGIVVRKHLIIITTTSVRPHQAYYLNRLAHVLKDVPPPLLWIVAEWPYQSRETAEILRSSGIMYRHLICNRNTTNIRKIVVCQKNNAIFHIKKHRLDGIVHFADEERAYSADLFEEMRKIRRFGTWPVAIHVGTKYRVVLEGPVCKGNQVTGWHTNQRRGVSRRFPIGFSGFAFNSTILWDPQRWNSPTLESIIVHSGGRGGLQESRFIEKLVEDESQMEGLGDNCTRVMVWNFELEPPQVNYPIGWLLQRNLDAVVPIT.

The tract at residues M1–S26 is disordered. The Cytoplasmic portion of the chain corresponds to M1–R85. The helical; Signal-anchor for type II membrane protein transmembrane segment at A86–F106 threads the bilayer. Topologically, residues S107–T446 are lumenal. N-linked (GlcNAc...) asparagine glycans are attached at residues N185, N258, N361, and N411.

It belongs to the glycosyltransferase 43 family.

It localises to the golgi apparatus membrane. In terms of biological role, probable beta-1,4-xylosyltransferase involved in xylan biosynthesis in cell walls. This Oryza sativa subsp. japonica (Rice) protein is Probable beta-1,4-xylosyltransferase IRX9L.